Consider the following 435-residue polypeptide: Proline--tRNA ligase (435 aa).

This sequence belongs to the class-II aminoacyl-tRNA synthetase family. ProS type 2 subfamily. Homodimer.

It localises to the cytoplasm. It catalyses the reaction tRNA(Pro) + L-proline + ATP = L-prolyl-tRNA(Pro) + AMP + diphosphate. In terms of biological role, catalyzes the attachment of proline to tRNA(Pro) in a two-step reaction: proline is first activated by ATP to form Pro-AMP and then transferred to the acceptor end of tRNA(Pro). This chain is Proline--tRNA ligase (proS), found in Sulfurimonas denitrificans (strain ATCC 33889 / DSM 1251) (Thiomicrospira denitrificans (strain ATCC 33889 / DSM 1251)).